Consider the following 88-residue polypeptide: Kunitz-type U15-theraphotoxin-Hhn1n (88 aa).

Positions 1–27 (MGIARILSAVLFLSVLFVVTFPTLLSA) are cleaved as a signal peptide. Residues 28–33 (DHHDGR) constitute a propeptide that is removed on maturation. The BPTI/Kunitz inhibitor domain maps to 37–85 (CRLPSDRGGCKASFERWYFNGTTCTKFVYGGYGGNDNRFPTEKACMKRC). Cystine bridges form between cysteine 37-cysteine 85 and cysteine 60-cysteine 81.

This sequence belongs to the venom Kunitz-type family. 01 (intermediate) subfamily. Expressed by the venom gland.

The protein resides in the secreted. Serine protease inhibitor that inhibits trypsin at a molar ratio of 1:1. This is Kunitz-type U15-theraphotoxin-Hhn1n from Cyriopagopus hainanus (Chinese bird spider).